The primary structure comprises 699 residues: Polyribonucleotide nucleotidyltransferase (699 aa).

Residues D485 and D491 each coordinate Mg(2+). Residues 552-611 (PRITTIKINPEKIRDVIGKGGAVIRALTEETGTTIELEDDGTVKIASNNGDATREAIRRI) form the KH domain. Residues 621–689 (GRLYTGKVIR…RQGRVRLSIK (69 aa)) form the S1 motif domain.

The protein belongs to the polyribonucleotide nucleotidyltransferase family. As to quaternary structure, component of the RNA degradosome, which is a multiprotein complex involved in RNA processing and mRNA degradation. Mg(2+) is required as a cofactor.

The protein resides in the cytoplasm. The enzyme catalyses RNA(n+1) + phosphate = RNA(n) + a ribonucleoside 5'-diphosphate. Involved in mRNA degradation. Catalyzes the phosphorolysis of single-stranded polyribonucleotides processively in the 3'- to 5'-direction. This is Polyribonucleotide nucleotidyltransferase from Shewanella amazonensis (strain ATCC BAA-1098 / SB2B).